The primary structure comprises 187 residues: Corticoliberin (187 aa).

The signal sequence occupies residues 1-19 (MRLRLLVSAGMLLVALSSC). Positions 20–144 (LPCRALLSRG…HQGALERERR (125 aa)) are excised as a propeptide. Disordered regions lie at residues 75–94 (AARL…SRPS) and 114–146 (QRSL…RRSE). The span at 117–129 (LDSRAEPAERGAE) shows a compositional bias: basic and acidic residues. Residue I185 is modified to Isoleucine amide.

The protein belongs to the sauvagine/corticotropin-releasing factor/urotensin I family. As to quaternary structure, interacts (via C-terminus) with CRFR1 (via N-terminal extracellular domain). As to expression, expressed in parvocellular paraventricular nucleus of the hypothalamus and in medial accessory olivary nucleus.

It localises to the secreted. Its function is as follows. Hormone regulating the release of corticotropin from pituitary gland. Induces NLRP6 in intestinal epithelial cells, hence may influence gut microbiota profile. This Mus musculus (Mouse) protein is Corticoliberin (Crh).